We begin with the raw amino-acid sequence, 679 residues long: Cysteine-rich receptor-like protein kinase 29 (679 aa).

Positions 1-23 (MEHVRVIFFFACFLTLAPFHAFA) are cleaved as a signal peptide. Topologically, residues 24-286 (QVDSYEFDPD…RTGKGKGGSK (263 aa)) are extracellular. Gnk2-homologous domains are found at residues 30 to 134 (FDPD…NRTI) and 140 to 249 (TNPT…TWRF). N-linked (GlcNAc...) asparagine glycosylation is found at N41, N45, N71, N107, N131, and N187. A disordered region spans residues 260-281 (PPAIQPADSPQSAARTERTGKG). The helical transmembrane segment at 287–307 (VIIAIVIPILLVALLAICLCL) threads the bilayer. The Cytoplasmic portion of the chain corresponds to 308–679 (VLKWRKNKSG…DVTVSEFSPR (372 aa)). A Protein kinase domain is found at 357–637 (FSSENELGRG…SLMLNSYSFT (281 aa)). ATP contacts are provided by residues 363-371 (LGRGGFGSV) and K385. Phosphotyrosine is present on Y430. D482 (proton acceptor) is an active-site residue. At S486 the chain carries Phosphoserine. Phosphothreonine is present on T524. Y532 is modified (phosphotyrosine). Residues 659 to 679 (SSTEGLQMSSNDVTVSEFSPR) form a disordered region.

Belongs to the protein kinase superfamily. Ser/Thr protein kinase family. CRK subfamily.

Its subcellular location is the membrane. It catalyses the reaction L-seryl-[protein] + ATP = O-phospho-L-seryl-[protein] + ADP + H(+). The enzyme catalyses L-threonyl-[protein] + ATP = O-phospho-L-threonyl-[protein] + ADP + H(+). This Arabidopsis thaliana (Mouse-ear cress) protein is Cysteine-rich receptor-like protein kinase 29 (CRK29).